The sequence spans 690 residues: Probable xyloglucan glycosyltransferase 1 (690 aa).

2 consecutive transmembrane segments (helical) span residues 120–140 (AFLL…AQGW) and 166–186 (LEYL…LFLI). Asp272 is a catalytic residue. Substrate contacts are provided by Asp331 and Asp333. Asp425 is an active-site residue. A run of 2 helical transmembrane segments spans residues 503–523 (LILP…TMFV) and 528–548 (LPAW…ILPA). A disordered region spans residues 607-637 (QPKQQRVGSAPNLDSLAKESHPKKDSKKKKH). A run of 2 helical transmembrane segments spans residues 640–659 (IYQK…ARSL) and 665–685 (IHFY…LDLI).

It belongs to the glycosyltransferase 2 family. Plant cellulose synthase-like C subfamily.

It is found in the golgi apparatus membrane. Probable beta-1,4-glucan synthase rather involved in the synthesis of the xyloglucan backbone than cellulose. Seems to work simultaneously with xyloglucan 6-xylosyltransferase. Xyloglucan is a noncellulosic polysaccharides of plant cell wall and consists of a glucan backbone substituted by xylose, galactose and fucose. This is Probable xyloglucan glycosyltransferase 1 (CSLC1) from Oryza sativa subsp. japonica (Rice).